The following is a 290-amino-acid chain: Acetyl-coenzyme A carboxylase carboxyl transferase subunit beta (290 aa).

One can recognise a CoA carboxyltransferase N-terminal domain in the interval 28-290 (VMTKCPQCKK…GGGESGWWRN (263 aa)). The Zn(2+) site is built by Cys-32, Cys-35, Cys-51, and Cys-54. Residues 32-54 (CPQCKKIMYTKELVKNLRVCLSC) form a C4-type zinc finger.

Belongs to the AccD/PCCB family. In terms of assembly, acetyl-CoA carboxylase is a heterohexamer composed of biotin carboxyl carrier protein (AccB), biotin carboxylase (AccC) and two subunits each of ACCase subunit alpha (AccA) and ACCase subunit beta (AccD). Zn(2+) serves as cofactor.

It localises to the cytoplasm. It carries out the reaction N(6)-carboxybiotinyl-L-lysyl-[protein] + acetyl-CoA = N(6)-biotinyl-L-lysyl-[protein] + malonyl-CoA. It participates in lipid metabolism; malonyl-CoA biosynthesis; malonyl-CoA from acetyl-CoA: step 1/1. Component of the acetyl coenzyme A carboxylase (ACC) complex. Biotin carboxylase (BC) catalyzes the carboxylation of biotin on its carrier protein (BCCP) and then the CO(2) group is transferred by the transcarboxylase to acetyl-CoA to form malonyl-CoA. The sequence is that of Acetyl-coenzyme A carboxylase carboxyl transferase subunit beta from Geobacillus thermodenitrificans (strain NG80-2).